The sequence spans 34 residues: NU-buthitoxin-Ptr1a (34 aa).

3 cysteine pairs are disulfide-bonded: Cys-6-Cys-27, Cys-12-Cys-32, and Cys-16-Cys-34.

Expressed by the venom gland.

The protein localises to the secreted. Toxin that acts as an agonist on melanocortin receptors (MC1R, MC3R, MC5R, MC5R). After binding to MC1R, the peptide activates the hMC1R/Gs pathway, but after binding to MC4R, it is not able to activate or antagonize the MC4R/Gs pathway. Inhibits melanocyte stimulating hormone (MSH)-binding to human receptors (Ki=2.9 uM to MC1R, Ki=3.9 uM to MC3R, Ki=2.6 uM to MC4R, Ki=2.2 uM to MC5R). This toxin is structurally unrelated to the natural agonists. The protein is NU-buthitoxin-Ptr1a of Parabuthus transvaalicus (Transvaal thick-tailed scorpion).